Here is a 656-residue protein sequence, read N- to C-terminus: Chaperone protein HtpG (656 aa).

Positions Met1 to Arg359 are a; substrate-binding. The interval Glu360–Arg575 is b. Residues Ile576–Met656 form a c region.

Belongs to the heat shock protein 90 family. As to quaternary structure, homodimer.

It is found in the cytoplasm. In terms of biological role, molecular chaperone. Has ATPase activity. The sequence is that of Chaperone protein HtpG from Mycobacterium leprae (strain TN).